The following is a 134-amino-acid chain: Profilin-4 (134 aa).

This sequence belongs to the profilin family. As to quaternary structure, occurs in many kinds of cells as a complex with monomeric actin in a 1:1 ratio. As to expression, specifically expressed in mature and germinating pollen grains, and growing pollen tubes (at protein level).

Its subcellular location is the cytoplasm. The protein localises to the cytoskeleton. Its function is as follows. Binds to actin monomers and regulates the organization of the actin cytoskeleton. At high concentrations, profilin prevents the polymerization of actin, whereas it enhances it at low concentrations. At low concentrations, associates with the poly-proline motif of formins to enhance actin filament elongation rate. Acts redundantly with PRF5 to regulate apical actin polymerization at the tip of pollen tube and control polarized pollen tube growth. Functions probably by favoring formin-mediated actin polymerization at pollen tube tips. The protein is Profilin-4 of Arabidopsis thaliana (Mouse-ear cress).